The sequence spans 148 residues: Fibroblast growth factor 1 (148 aa).

Positions 1–11 (EITTFAALTER) are excised as a propeptide. Residue Asn-29 coordinates heparin. A heparin-binding region spans residues 123 to 139 (KKNGKTKLGSRTHFGQK).

The protein belongs to the heparin-binding growth factors family.

Its subcellular location is the secreted. It is found in the cytoplasm. The protein resides in the cell cortex. It localises to the cytosol. The protein localises to the nucleus. Its function is as follows. Plays an important role in the regulation of cell survival, cell division, angiogenesis, cell differentiation and cell migration. Functions as a potent mitogen in vitro. Acts as a ligand for FGFR1 and integrins. Binds to FGFR1 in the presence of heparin leading to FGFR1 dimerization and activation via sequential autophosphorylation on tyrosine residues which act as docking sites for interacting proteins, leading to the activation of several signaling cascades. Binds to integrins. Its binding to integrins and subsequent ternary complex formation with integrins and FGFR1 are essential for FGF1 signaling. The polypeptide is Fibroblast growth factor 1 (fgf1) (Cynops pyrrhogaster (Japanese fire-bellied newt)).